The chain runs to 973 residues: Isoleucine--tRNA ligase, mitochondrial (973 aa).

The 'HIGH' region signature appears at 87–97; sequence PFANGRLHIGH. Residues 625-629 carry the 'KMSKS' region motif; it reads KQSKS. K628 is a binding site for ATP.

This sequence belongs to the class-I aminoacyl-tRNA synthetase family.

The protein localises to the cytoplasm. The protein resides in the mitochondrion matrix. It catalyses the reaction tRNA(Ile) + L-isoleucine + ATP = L-isoleucyl-tRNA(Ile) + AMP + diphosphate. The polypeptide is Isoleucine--tRNA ligase, mitochondrial (ism1) (Schizosaccharomyces pombe (strain 972 / ATCC 24843) (Fission yeast)).